The sequence spans 1358 residues: Retrotransposon-like protein 1 (1358 aa).

2 disordered regions span residues methionine 1–serine 159 and alanine 563–tryptophan 616. Residues serine 19 to serine 30 are compositionally biased toward low complexity. A compositionally biased stretch (acidic residues) spans glutamate 65–glutamate 79. Basic and acidic residues predominate over residues alanine 131–threonine 149. Residues glycine 583–proline 592 show a composition bias toward acidic residues. 2 helical membrane-spanning segments follow: residues leucine 1083–leucine 1099 and leucine 1126–leucine 1146. Disordered regions lie at residues aspartate 1250 to leucine 1283 and glutamine 1338 to aspartate 1358. Positions alanine 1267–histidine 1276 are enriched in low complexity. Over residues glutamine 1338–glutamate 1347 the composition is skewed to basic and acidic residues. Residues leucine 1348–aspartate 1358 show a composition bias toward acidic residues.

It is found in the membrane. Its function is as follows. Plays an essential role in capillaries endothelial cells for the maintenance of feto-maternal interface and for development of the placenta. This chain is Retrotransposon-like protein 1 (RTL1), found in Homo sapiens (Human).